The following is a 634-amino-acid chain: Poly(ribitol-phosphate) beta-glucosyltransferase (634 aa).

Belongs to the glycosyltransferase 2 family.

The enzyme catalyses 4-O-[(D-ribitylphospho)(n)-D-ribitylphospho-(2R)-glycerylphospho]-N-acetyl-beta-D-mannosaminyl-(1-&gt;4)-N-acetyl-alpha-D-glucosaminyl di-trans,octa-cis-undecaprenyl diphosphate + n UDP-alpha-D-glucose = 4-O-[(2-beta-D-glucosyl-D-ribitylphospho)(n)-D-ribitylphospho-(2R)-glycerylphospho]-N-acetyl-beta-D-mannosaminyl-(1-&gt;4)-N-acetyl-alpha-D-glucosaminyl di-trans,octa-cis-undecaprenyl diphosphate + n UDP + n H(+). It functions in the pathway cell wall biogenesis; poly(ribitol phosphate) teichoic acid biosynthesis. Attaches glucose residues to poly(RboP)-wall teichoic acids (WTAs). In Bacillus spizizenii (strain ATCC 23059 / NRRL B-14472 / W23) (Bacillus subtilis subsp. spizizenii), this protein is Poly(ribitol-phosphate) beta-glucosyltransferase.